A 396-amino-acid chain; its full sequence is 1-deoxy-D-xylulose 5-phosphate reductoisomerase (396 aa).

NADPH contacts are provided by threonine 15, glycine 16, serine 17, isoleucine 18, glycine 41, and asparagine 130. Lysine 131 serves as a coordination point for 1-deoxy-D-xylulose 5-phosphate. Glutamate 132 provides a ligand contact to NADPH. Residue aspartate 155 participates in Mn(2+) binding. Positions 156, 157, 181, and 204 each coordinate 1-deoxy-D-xylulose 5-phosphate. Glutamate 157 lines the Mn(2+) pocket. Residue glycine 210 participates in NADPH binding. Residues serine 217, asparagine 222, lysine 223, and glutamate 226 each coordinate 1-deoxy-D-xylulose 5-phosphate. Glutamate 226 contacts Mn(2+).

It belongs to the DXR family. The cofactor is Mg(2+). Requires Mn(2+) as cofactor.

It carries out the reaction 2-C-methyl-D-erythritol 4-phosphate + NADP(+) = 1-deoxy-D-xylulose 5-phosphate + NADPH + H(+). It functions in the pathway isoprenoid biosynthesis; isopentenyl diphosphate biosynthesis via DXP pathway; isopentenyl diphosphate from 1-deoxy-D-xylulose 5-phosphate: step 1/6. Functionally, catalyzes the NADPH-dependent rearrangement and reduction of 1-deoxy-D-xylulose-5-phosphate (DXP) to 2-C-methyl-D-erythritol 4-phosphate (MEP). The chain is 1-deoxy-D-xylulose 5-phosphate reductoisomerase from Bifidobacterium longum (strain NCC 2705).